The sequence spans 60 residues: Conotoxin Cal6.30 (60 aa).

The signal sequence occupies residues 1–22; that stretch reads MKVTCVLTLAVLILTIGQIANA. 3 disulfides stabilise this stretch: Cys-31-Cys-47, Cys-38-Cys-51, and Cys-46-Cys-55.

As to expression, expressed by the venom duct.

It localises to the secreted. Its function is as follows. Probable neurotoxin. In Californiconus californicus (California cone), this protein is Conotoxin Cal6.30.